The sequence spans 259 residues: MASGREEFVYMAKLAEQAERYEEMVEFMEKVSAAVDGDELTVEERNLLSVAYKNVIGARRASWRIISSIEQKEESRGNDDHVTAIREYRSKIETELSGICDGILKLLDSRLIPAAASGDSKVFYLKMKGDYHRYLAEFKTGQERKDAAEHTLAAYKSAQDIANAELAPTHPIRLGLALNFSVFYYEILNSPDRACNLAKQAFDEAIAELDTLGEESYKDSTLIMQLLRDNLTLWTSDMQDDAADEIKEAAAPKPTEEQQ.

A phosphoserine mark is found at serine 67, serine 109, and serine 190. Threonine 211 carries the phosphothreonine modification.

It belongs to the 14-3-3 family. As to quaternary structure, interacts with CINV1.

It is found in the nucleus. The protein resides in the cytoplasm. Its function is as follows. Is associated with a DNA binding complex that binds to the G box, a well-characterized cis-acting DNA regulatory element found in plant genes. The protein is 14-3-3-like protein GF14 omega (GRF2) of Arabidopsis thaliana (Mouse-ear cress).